We begin with the raw amino-acid sequence, 388 residues long: Plasminogen-binding group A streptococcal M-like protein PAM (388 aa).

Residues 1 to 29 (RKLKTGTASVAVALTVVGAGLASQTEVKA) form the signal peptide. Residues 85–113 (VEKLTADAELQRLKNERHEEAELERLKSE) form an able to bind plasminogen region. Residues 91–103 (DAELQRLKNERHE) form an A-1 repeat. Residues 91–116 (DAELQRLKNERHEEAELERLKSERHD) are 2 X approximate tandem repeats, type a. Basic and acidic residues-rich tracts occupy residues 95 to 137 (QRLK…KQEH), 145 to 168 (INEKEAEAKEKEAEQKKLKEEKQI), 176 to 189 (LRRDLDASREAKKQ), 218 to 231 (LRRDLDASREAKKQ), and 260 to 269 (LRRDLDASRE). 3 disordered regions span residues 95–189 (QRLK…AKKQ), 204–231 (VKEEKQISDASRQGLRRDLDASREAKKQ), and 248–269 (EEKQISDASRQGLRRDLDASRE). Residues 104-116 (EAELERLKSERHD) form an A-2 repeat. The B-1 repeat unit spans residues 147-153 (EKEAEAK). Residues 147 to 161 (EKEAEAKEKEAEQKK) form a 2 X tandem repeats, type b region. The B-2 repeat unit spans residues 154–159 (EKEAEQ). C repeat units follow at residues 160–194 (KKLKEEKQISDASRQGLRRDLDASREAKKQVEKDL), 202–236 (DKVKEEKQISDASRQGLRRDLDASREAKKQVEKGL), and 244–278 (DKVKEEKQISDASRQGLRRDLDASREAKKQVEKAL). D repeat units follow at residues 311–316 (AKLEAE), 317–322 (AKALKE), 325–330 (AKQAEE), and 332–337 (AKLRAE). Positions 331-340 (LAKLRAEKAS) are enriched in basic and acidic residues. The tract at residues 331–388 (LAKLRAEKASDSQTPDAKPGNKAVPGKGQAPQAGTKPNQNKAPMKETKRQLPSTGETT) is disordered. Residues 381-385 (LPSTG) carry the LPXTG sorting signal motif. The residue at position 384 (T384) is a Pentaglycyl murein peptidoglycan amidated threonine. Positions 385–388 (GETT) are cleaved as a propeptide — removed by sortase.

It belongs to the M protein family.

It localises to the secreted. It is found in the cell wall. Binds to human plasminogen (and plasmin) via its kringle repeats. Also binds to albumin, immunoglobulin G and fibrinogen. Could provide the bacteria with a mechanism for invasion, as streptococcal-bound plasmin could permit tissue penetration. This chain is Plasminogen-binding group A streptococcal M-like protein PAM (pam), found in Streptococcus pyogenes.